Consider the following 160-residue polypeptide: V-type proton ATPase subunit c (160 aa).

Residues 1-8 (MTELCPVY) lie on the Vacuolar side of the membrane. A helical membrane pass occupies residues 9–31 (APFFGAIGCASAIIFTSLGAAYG). The Cytoplasmic portion of the chain corresponds to 32–53 (TAKSGVGICATCVLRPDLLFKN). Residues 54 to 74 (IVPVIMAGIIAIYGLVVSVLV) form a helical membrane-spanning segment. Residues 75–90 (CYSLGQKQALYTGFIQ) are Vacuolar-facing. A helical membrane pass occupies residues 91–112 (LGAGLSVGLSGLAAGFAIGIVG). At 113–124 (DAGVRGSSQQPR) the chain is on the cytoplasmic side. Residues 125–150 (LFVGMILILIFAEVLGLYGLIVALLL) traverse the membrane as a helical segment. Residues 151-160 (NSRATQDVVC) are Vacuolar-facing.

The protein belongs to the V-ATPase proteolipid subunit family. V-ATPase is a heteromultimeric enzyme composed of a peripheral catalytic V1 complex (components A to H) attached to an integral membrane V0 proton pore complex (components: a, c, c', c'', d, e, f and VOA1). The decameric c-ring forms the proton-conducting pore, and is composed of eight proteolipid subunits c, one subunit c' and one subunit c''.

The protein resides in the vacuole membrane. In terms of biological role, proton-conducting pore forming subunit of the V0 complex of vacuolar(H+)-ATPase (V-ATPase), a multisubunit enzyme composed of a peripheral complex (V1) that hydrolyzes ATP and a membrane integral complex (V0) that translocates protons. V-ATPase is responsible for acidifying and maintaining the pH of intracellular compartments. This Saccharomyces cerevisiae (strain ATCC 204508 / S288c) (Baker's yeast) protein is V-type proton ATPase subunit c (VMA3).